An 828-amino-acid polypeptide reads, in one-letter code: Periplasmic nitrate reductase (828 aa).

The segment at residues Met1–Ala31 is a signal peptide (tat-type signal). A 4Fe-4S Mo/W bis-MGD-type domain is found at Ile39–Asp95. [4Fe-4S] cluster is bound by residues Cys46, Cys49, Cys53, and Cys81. Mo-bis(molybdopterin guanine dinucleotide) is bound by residues Lys83, Gln150, Asn175, Cys179, Trp212 to Met219, Ser243 to His247, Gln262 to Asp264, Met372, Gln376, Asn482, Ser508 to Asp509, Lys531, Asp558, and Thr718 to Thr727. Phe794 provides a ligand contact to substrate. Mo-bis(molybdopterin guanine dinucleotide)-binding residues include Asn802 and Lys819.

The protein belongs to the prokaryotic molybdopterin-containing oxidoreductase family. NasA/NapA/NarB subfamily. In terms of assembly, component of the periplasmic nitrate reductase NapAB complex composed of NapA and NapB. [4Fe-4S] cluster serves as cofactor. Mo-bis(molybdopterin guanine dinucleotide) is required as a cofactor. Post-translationally, predicted to be exported by the Tat system. The position of the signal peptide cleavage has not been experimentally proven.

Its subcellular location is the periplasm. It carries out the reaction 2 Fe(II)-[cytochrome] + nitrate + 2 H(+) = 2 Fe(III)-[cytochrome] + nitrite + H2O. In terms of biological role, catalytic subunit of the periplasmic nitrate reductase complex NapAB. Receives electrons from NapB and catalyzes the reduction of nitrate to nitrite. This is Periplasmic nitrate reductase from Shigella boydii serotype 4 (strain Sb227).